The primary structure comprises 407 residues: Transmembrane protein 184B (407 aa).

A compositionally biased stretch (low complexity) spans 1–28 (MTVRGAALAPDPASPTTTTASPSVSATP). Positions 1 to 31 (MTVRGAALAPDPASPTTTTASPSVSATPEGS) are disordered. The next 7 membrane-spanning stretches (helical) occupy residues 40-60 (FLMT…ALLI), 84-104 (ILFI…FFTN), 121-141 (FVIY…SAIM), 178-198 (LQFC…QAFG), 214-234 (VTII…LFYF), 249-269 (FFMV…LAIL), and 290-310 (VAAG…ALAL). The tract at residues 369–395 (TLEPGPTWRGGTHSLSRSHSLSGARDN) is disordered. 3 positions are modified to phosphoserine: Ser388, Ser402, and Ser403.

The protein belongs to the TMEM184 family.

Its subcellular location is the membrane. May activate the MAP kinase signaling pathway. The sequence is that of Transmembrane protein 184B (Tmem184b) from Mus musculus (Mouse).